A 235-amino-acid polypeptide reads, in one-letter code: Zorya protein ZorB (235 aa).

The chain crosses the membrane as a helical span at residues L25–V44. The region spanning Q87–A225 is the OmpA-like domain.

It belongs to the MotB family.

It is found in the cell inner membrane. In terms of biological role, component of antiviral defense system Zorya type II, composed of ZorA, ZorB and ZorE. Expression of Zorya type II in E.coli (strain MG1655) confers resistance to phages SECphi7 and T7. While most T7 infected Zorya-containing cells undergo abortive infection, a minority produce viable phage progeny. These eventually accumulate to a high multiplicity of infection, leading to culture collapse by 170 minutes after initial infection. ZorA and ZorB probably assemble in the cell inner membrane and exert their effect there. The chain is Zorya protein ZorB from Escherichia coli (strain ATCC 8739 / DSM 1576 / NBRC 3972 / NCIMB 8545 / WDCM 00012 / Crooks).